The following is an 807-amino-acid chain: Ribosome-releasing factor 2, mitochondrial (807 aa).

The N-terminal 18 residues, 1–18, are a transit peptide targeting the mitochondrion; it reads MFCRKYVFQTWKQLSRSY. The region spanning 27-315 is the tr-type G domain; that stretch reads AKTRNIGIIA…GITKYLPSPL (289 aa). GTP-binding positions include 36 to 43, 100 to 104, and 154 to 157; these read AHIDAGKT, DTPGH, and NKMD.

The protein belongs to the TRAFAC class translation factor GTPase superfamily. Classic translation factor GTPase family. EF-G/EF-2 subfamily.

The protein localises to the mitochondrion. Its function is as follows. Mitochondrial GTPase that mediates the disassembly of ribosomes from messenger RNA at the termination of mitochondrial protein biosynthesis. Not involved in the GTP-dependent ribosomal translocation step during translation elongation. The sequence is that of Ribosome-releasing factor 2, mitochondrial from Candida albicans (strain SC5314 / ATCC MYA-2876) (Yeast).